Reading from the N-terminus, the 448-residue chain is Phosphoglucosamine mutase (448 aa).

Residue S101 is the Phosphoserine intermediate of the active site. Positions 101, 242, 244, and 246 each coordinate Mg(2+). A Phosphoserine modification is found at S101.

The protein belongs to the phosphohexose mutase family. Requires Mg(2+) as cofactor. Activated by phosphorylation.

The catalysed reaction is alpha-D-glucosamine 1-phosphate = D-glucosamine 6-phosphate. Its function is as follows. Catalyzes the conversion of glucosamine-6-phosphate to glucosamine-1-phosphate. The polypeptide is Phosphoglucosamine mutase (Afipia carboxidovorans (strain ATCC 49405 / DSM 1227 / KCTC 32145 / OM5) (Oligotropha carboxidovorans)).